Here is a 1433-residue protein sequence, read N- to C-terminus: Gag-Pol polyprotein (1433 aa).

A lipid anchor (N-myristoyl glycine; by host) is attached at G2. Residues 7–31 (VLTGGKLDAWEKIRLRPGGRKSYKI) form an interaction with Gp41 region. An interaction with host CALM1 region spans residues 8-43 (LTGGKLDAWEKIRLRPGGRKSYKIKHLVWASRELER). Positions 12-19 (KLDAWEKI) are interaction with host AP3D1. Residues 14–33 (DAWEKIRLRPGGRKSYKIKH) form an interaction with membrane phosphatidylinositol 4,5-bisphosphate and RNA region. The Nuclear export signal motif lies at 16–22 (WEKIRLR). Residues 26 to 32 (RKSYKIK) carry the Nuclear localization signal motif. The segment at 73–77 (EEIKS) is interaction with membrane phosphatidylinositol 4,5-bisphosphate. Residue Y132 is modified to Phosphotyrosine; by host. Residues 189–227 (NTVGGHQAAMQMLKDTINEEAAEWDRMHPQQAGPFPPGQ) form an interaction with human PPIA/CYPA and NUP153 region. Positions 277–363 (YSPVSILDIR…GGPSHKARVL (87 aa)) are dimerization/Multimerization of capsid protein p24. 2 CCHC-type zinc fingers span residues 391-408 (IKCFNCGKEGHLARNCRA) and 412-429 (KGCWKCGKEGHQMKDCTE). Residues 445-455 (EAREFSSEQDR) show a composition bias toward basic and acidic residues. The disordered stretch occupies residues 445–481 (EAREFSSEQDRTNSPTCRKPRVRRGDSPLPEAGDEGK). The tract at residues 487–491 (PQITL) is dimerization of protease. In terms of domain architecture, Peptidase A2 spans 506–575 (IEALLDTGAD…TPINIIGRNM (70 aa)). D511 acts as the For protease activity; shared with dimeric partner in catalysis. 2 dimerization of protease regions span residues 535–541 (GIGGFIK) and 574–586 (NMLTQIGCTLNFP). Residues 629–819 (EGKISKIGPE…PPFLWMGYEL (191 aa)) enclose the Reverse transcriptase domain. Positions 695, 770, and 771 each coordinate Mg(2+). The RT 'primer grip' stretch occupies residues 812–820 (FLWMGYELH). Positions 983–999 (WEIWWTDYWQATWIPEW) match the Tryptophan repeat motif motif. The RNase H type-1 domain maps to 1019-1142 (IPGAETYYVD…VDKLVSSGIR (124 aa)). Residues D1028, E1063, D1083, and D1134 each contribute to the Mg(2+) site. The Integrase-type zinc-finger motif lies at 1148 to 1189 (DGIDKAQEEHERYHNNWRAMASDFNLPPIVAKEIVASCDKCQ). 4 residues coordinate Zn(2+): H1157, H1161, C1185, and C1188. One can recognise an Integrase catalytic domain in the interval 1199 to 1349 (VDCSPGIWQL…SAGERIIDII (151 aa)). D1209, D1261, and E1297 together coordinate Mg(2+). The integrase-type DNA-binding region spans 1368–1415 (FRVYYRDSRDPVWKGPAKLLWKGEGAVVIQDNNEIKVVPRRKAKIIRD).

In terms of assembly, homotrimer; further assembles as hexamers of trimers. Interacts with gp41 (via C-terminus). Interacts with host CALM1; this interaction induces a conformational change in the Matrix protein, triggering exposure of the myristate group. Interacts with host AP3D1; this interaction allows the polyprotein trafficking to multivesicular bodies during virus assembly. Part of the pre-integration complex (PIC) which is composed of viral genome, matrix protein, Vpr and integrase. As to quaternary structure, homodimer; the homodimer further multimerizes as homohexamers or homopentamers. Interacts with human PPIA/CYPA; This interaction stabilizes the capsid. Interacts with human NUP153. Interacts with host PDZD8; this interaction stabilizes the capsid. Interacts with monkey TRIM5; this interaction destabilizes the capsid. Homodimer, whose active site consists of two apposed aspartic acid residues. In terms of assembly, heterodimer of p66 RT and p51 RT (RT p66/p51). Heterodimerization of RT is essential for DNA polymerase activity. The overall folding of the subdomains is similar in p66 RT and p51 RT but the spatial arrangements of the subdomains are dramatically different. As to quaternary structure, homotetramer; may further associate as a homohexadecamer. Part of the pre-integration complex (PIC) which is composed of viral genome, matrix protein, Vpr and integrase. Interacts with human SMARCB1/INI1 and human PSIP1/LEDGF isoform 1. Interacts with human KPNA3; this interaction might play a role in nuclear import of the pre-integration complex. Interacts with human NUP153; this interaction might play a role in nuclear import of the pre-integration complex. Mg(2+) is required as a cofactor. In terms of processing, specific enzymatic cleavages by the viral protease yield mature proteins. The protease is released by autocatalytic cleavage. The polyprotein is cleaved during and after budding, this process is termed maturation. Proteolytic cleavage of p66 RT removes the RNase H domain to yield the p51 RT subunit. Nucleocapsid protein p7 might be further cleaved after virus entry. Post-translationally, tyrosine phosphorylated presumably in the virion by a host kinase. Phosphorylation is apparently not a major regulator of membrane association. Phosphorylated possibly by host MAPK1; this phosphorylation is necessary for Pin1-mediated virion uncoating. In terms of processing, methylated by host PRMT6, impairing its function by reducing RNA annealing and the initiation of reverse transcription.

It is found in the host cell membrane. Its subcellular location is the host endosome. The protein resides in the host multivesicular body. It localises to the virion membrane. The protein localises to the host nucleus. It is found in the host cytoplasm. Its subcellular location is the virion. It carries out the reaction Specific for a P1 residue that is hydrophobic, and P1' variable, but often Pro.. The catalysed reaction is Endohydrolysis of RNA in RNA/DNA hybrids. Three different cleavage modes: 1. sequence-specific internal cleavage of RNA. Human immunodeficiency virus type 1 and Moloney murine leukemia virus enzymes prefer to cleave the RNA strand one nucleotide away from the RNA-DNA junction. 2. RNA 5'-end directed cleavage 13-19 nucleotides from the RNA end. 3. DNA 3'-end directed cleavage 15-20 nucleotides away from the primer terminus.. The enzyme catalyses 3'-end directed exonucleolytic cleavage of viral RNA-DNA hybrid.. It catalyses the reaction DNA(n) + a 2'-deoxyribonucleoside 5'-triphosphate = DNA(n+1) + diphosphate. Protease: The viral protease is inhibited by many synthetic protease inhibitors (PIs), such as amprenavir, atazanavir, indinavir, loprinavir, nelfinavir, ritonavir and saquinavir. Use of protease inhibitors in tritherapy regimens permit more ambitious therapeutic strategies. Reverse transcriptase/ribonuclease H: RT can be inhibited either by nucleoside RT inhibitors (NRTIs) or by non nucleoside RT inhibitors (NNRTIs). NRTIs act as chain terminators, whereas NNRTIs inhibit DNA polymerization by binding a small hydrophobic pocket near the RT active site and inducing an allosteric change in this region. Classical NRTIs are abacavir, adefovir (PMEA), didanosine (ddI), lamivudine (3TC), stavudine (d4T), tenofovir (PMPA), zalcitabine (ddC), and zidovudine (AZT). Classical NNRTIs are atevirdine (BHAP U-87201E), delavirdine, efavirenz (DMP-266), emivirine (I-EBU), and nevirapine (BI-RG-587). The tritherapies used as a basic effective treatment of AIDS associate two NRTIs and one NNRTI. In terms of biological role, mediates, with Gag polyprotein, the essential events in virion assembly, including binding the plasma membrane, making the protein-protein interactions necessary to create spherical particles, recruiting the viral Env proteins, and packaging the genomic RNA via direct interactions with the RNA packaging sequence (Psi). Gag-Pol polyprotein may regulate its own translation, by the binding genomic RNA in the 5'-UTR. At low concentration, the polyprotein would promote translation, whereas at high concentration, the polyprotein would encapsidate genomic RNA and then shut off translation. Targets the polyprotein to the plasma membrane via a multipartite membrane-binding signal, that includes its myristoylated N-terminus. Matrix protein is part of the pre-integration complex. Implicated in the release from host cell mediated by Vpu. Binds to RNA. Its function is as follows. Forms the conical core that encapsulates the genomic RNA-nucleocapsid complex in the virion. Most core are conical, with only 7% tubular. The core is constituted by capsid protein hexamer subunits. The core is disassembled soon after virion entry. Host restriction factors such as TRIM5-alpha or TRIMCyp bind retroviral capsids and cause premature capsid disassembly, leading to blocks in reverse transcription. Capsid restriction by TRIM5 is one of the factors which restricts HIV-1 to the human species. Host PIN1 apparently facilitates the virion uncoating. On the other hand, interactions with PDZD8 or CYPA stabilize the capsid. Functionally, encapsulates and protects viral dimeric unspliced genomic RNA (gRNA). Binds these RNAs through its zinc fingers. Acts as a nucleic acid chaperone which is involved in rearangement of nucleic acid secondary structure during gRNA retrotranscription. Also facilitates template switch leading to recombination. As part of the polyprotein, participates in gRNA dimerization, packaging, tRNA incorporation and virion assembly. In terms of biological role, aspartyl protease that mediates proteolytic cleavages of Gag and Gag-Pol polyproteins during or shortly after the release of the virion from the plasma membrane. Cleavages take place as an ordered, step-wise cascade to yield mature proteins. This process is called maturation. Displays maximal activity during the budding process just prior to particle release from the cell. Also cleaves Nef and Vif, probably concomitantly with viral structural proteins on maturation of virus particles. Hydrolyzes host EIF4GI and PABP1 in order to shut off the capped cellular mRNA translation. The resulting inhibition of cellular protein synthesis serves to ensure maximal viral gene expression and to evade host immune response. Also mediates cleavage of host YTHDF3. Mediates cleavage of host CARD8, thereby activating the CARD8 inflammasome, leading to the clearance of latent HIV-1 in patient CD4(+) T-cells after viral reactivation; in contrast, HIV-1 can evade CARD8-sensing when its protease remains inactive in infected cells prior to viral budding. Multifunctional enzyme that converts the viral RNA genome into dsDNA in the cytoplasm, shortly after virus entry into the cell. This enzyme displays a DNA polymerase activity that can copy either DNA or RNA templates, and a ribonuclease H (RNase H) activity that cleaves the RNA strand of RNA-DNA heteroduplexes in a partially processive 3' to 5' endonucleasic mode. Conversion of viral genomic RNA into dsDNA requires many steps. A tRNA(3)-Lys binds to the primer-binding site (PBS) situated at the 5'-end of the viral RNA. RT uses the 3' end of the tRNA primer to perform a short round of RNA-dependent minus-strand DNA synthesis. The reading proceeds through the U5 region and ends after the repeated (R) region which is present at both ends of viral RNA. The portion of the RNA-DNA heteroduplex is digested by the RNase H, resulting in a ssDNA product attached to the tRNA primer. This ssDNA/tRNA hybridizes with the identical R region situated at the 3' end of viral RNA. This template exchange, known as minus-strand DNA strong stop transfer, can be either intra- or intermolecular. RT uses the 3' end of this newly synthesized short ssDNA to perform the RNA-dependent minus-strand DNA synthesis of the whole template. RNase H digests the RNA template except for two polypurine tracts (PPTs) situated at the 5'-end and near the center of the genome. It is not clear if both polymerase and RNase H activities are simultaneous. RNase H probably can proceed both in a polymerase-dependent (RNA cut into small fragments by the same RT performing DNA synthesis) and a polymerase-independent mode (cleavage of remaining RNA fragments by free RTs). Secondly, RT performs DNA-directed plus-strand DNA synthesis using the PPTs that have not been removed by RNase H as primers. PPTs and tRNA primers are then removed by RNase H. The 3' and 5' ssDNA PBS regions hybridize to form a circular dsDNA intermediate. Strand displacement synthesis by RT to the PBS and PPT ends produces a blunt ended, linear dsDNA copy of the viral genome that includes long terminal repeats (LTRs) at both ends. Its function is as follows. Catalyzes viral DNA integration into the host chromosome, by performing a series of DNA cutting and joining reactions. This enzyme activity takes place after virion entry into a cell and reverse transcription of the RNA genome in dsDNA. The first step in the integration process is 3' processing. This step requires a complex comprising the viral genome, matrix protein, Vpr and integrase. This complex is called the pre-integration complex (PIC). The integrase protein removes 2 nucleotides from each 3' end of the viral DNA, leaving recessed CA OH's at the 3' ends. In the second step, the PIC enters cell nucleus. This process is mediated through integrase and Vpr proteins, and allows the virus to infect a non dividing cell. This ability to enter the nucleus is specific of lentiviruses, other retroviruses cannot and rely on cell division to access cell chromosomes. In the third step, termed strand transfer, the integrase protein joins the previously processed 3' ends to the 5' ends of strands of target cellular DNA at the site of integration. The 5'-ends are produced by integrase-catalyzed staggered cuts, 5 bp apart. A Y-shaped, gapped, recombination intermediate results, with the 5'-ends of the viral DNA strands and the 3' ends of target DNA strands remaining unjoined, flanking a gap of 5 bp. The last step is viral DNA integration into host chromosome. This involves host DNA repair synthesis in which the 5 bp gaps between the unjoined strands are filled in and then ligated. Since this process occurs at both cuts flanking the HIV genome, a 5 bp duplication of host DNA is produced at the ends of HIV-1 integration. Alternatively, Integrase may catalyze the excision of viral DNA just after strand transfer, this is termed disintegration. The polypeptide is Gag-Pol polyprotein (gag-pol) (Human immunodeficiency virus type 1 group M subtype G (isolate SE6165) (HIV-1)).